The chain runs to 609 residues: mRNA cap guanine-N(7) methyltransferase (609 aa).

Positions 1 to 10 are enriched in basic and acidic residues; the sequence is MASKEEERTG. The interval 1–252 is disordered; sequence MASKEEERTG…EEDAMRNSQS (252 aa). 2 stretches are compositionally biased toward low complexity: residues 28 to 47 and 70 to 87; these read QPVV…ATPT and PQTT…QQKQ. Basic and acidic residues predominate over residues 148 to 163; sequence ANDRPISKRKRLEERH. Over residues 193–205 the composition is skewed to pro residues; it reads PRSPSPPLPPRSP. Over residues 233-247 the composition is skewed to basic and acidic residues; the sequence is RRQEERERALEEDAM. One can recognise an mRNA cap 0 methyltransferase domain in the interval 278–590; that stretch reads SKIKGLRSFN…KYTPLGFTSA (313 aa). 287 to 288 provides a ligand contact to mRNA; it reads NN. S-adenosyl-L-methionine is bound by residues lysine 291, glycine 314, aspartate 338, aspartate 379, 422 to 424, and tyrosine 427; that span reads MFA.

This sequence belongs to the class I-like SAM-binding methyltransferase superfamily. mRNA cap 0 methyltransferase family.

The protein resides in the nucleus. It carries out the reaction a 5'-end (5'-triphosphoguanosine)-ribonucleoside in mRNA + S-adenosyl-L-methionine = a 5'-end (N(7)-methyl 5'-triphosphoguanosine)-ribonucleoside in mRNA + S-adenosyl-L-homocysteine. In terms of biological role, responsible for methylating the 5'-cap structure of mRNAs. This Aspergillus niger (strain ATCC MYA-4892 / CBS 513.88 / FGSC A1513) protein is mRNA cap guanine-N(7) methyltransferase (abd1).